Here is a 1112-residue protein sequence, read N- to C-terminus: MAEEESDQEAERLGEELVAIVESPPGPVGLLAAGDGRGGAGGGGCGGGVGISSRDYCRRFCQVVEDYAGRWQVPLPQLQVLQTALCCFTSASASFPDECEHVQYVLSSLAVSFFELLLFFGRDEFYEEPLKDILGSFQECQNHLRRYGNVNLELVTRIIKDGGPWEDPVLQAVLKAQPASQEIVNKYLSSENPLFFELRARYLIACERIPEAMALIKSCINHPEISKDLYFHQALFTCLFMSPVEDQLFREHLLKTDCKSGIDIICNTEKEGKTLLALQLCESFLIPQLQNGDMYYIWELIFLWSKLQLKSNPSKQVFVDQCYQLLRTATNVRVIFPFMKIIKDEVEEEGLQICVEICGCALQLDLHDDPETKCLIYKTIAHFLPNDLEIVRVCALSVFFLERSLDAYHTVEELYRRPDEEYSEGMSTVQNRVRFELLPILKKGLFFDPEFWNFVMIKKNCVALLRDKSAVKLLNENTLENPSSSLKKRVDQQSVEEDQSTGETDPDDASVVQPKGQVNVKRSLSALNTSKVDHSVPRHRCMLCNKEFLGGHIVRHAQAHQKKGSFACVICGRKFRNRGLMQKHLKNHVKKIQRQQIATAQQDDPEVITLEEINGSKSLISFENGNSNTKGLEIETLTASSERNKEVIREHMAEFIKIPIAIPENAIENIIENGKPDASFNNISESLPQCDDDYEEEENEDDYEDDYDLNQETSVLHKINGTVCHPKDVYATDQEGNFKCPALGCVRIFKRIGFLNMHARTVHPTDLNVRQTVMKWSKGKCKFCQRQFEDSQHFIDHLNRHSYPNVYFCLHFNCNESFKLPFQLAQHTKSHRIFQAQCSFPECHELFEDLPLLYEHEAQHYLSKTPESSAQLSEVVPNHQEIDPFSNENQTIHHPVSTSKSRKYSTEPKTYIDTMEKKTDSLVHNGNEHSDDTVSNISLIDQKMPAIEPNPENTHSTTDLVNGHSEIEQTPLVTSDPTLKIDINRNRTENGSILPSVESQEHSALSVSQAPSKPNLTSEQTSYGLIVTKPFVRPLPPSYLDERYLSMPKRRKFLTDIVDACSDQDNMYKKPVKRLRCGKCLTTYCNAEALEAHLAQKKCQTLFGFDSDDESA.

The interval 482-514 (PSSSLKKRVDQQSVEEDQSTGETDPDDASVVQP) is disordered. Positions 494–508 (SVEEDQSTGETDPDD) are enriched in acidic residues. 5 C2H2-type zinc fingers span residues 566–588 (FACV…LKNH), 738–763 (FKCP…RTVH), 779–801 (GKCK…LNRH), 807–831 (YFCL…TKSH), and 836–860 (AQCS…EAQH). Disordered regions lie at residues 885–906 (FSNE…KYST) and 997–1018 (VESQ…NLTS). Polar residues-rich tracts occupy residues 886 to 899 (SNEN…VSTS) and 1002 to 1018 (HSAL…NLTS). Residues Ser1107 and Ser1111 each carry the phosphoserine modification.

The protein belongs to the krueppel C2H2-type zinc-finger protein family.

It is found in the nucleus. May be involved in transcriptional regulation. This chain is Zinc finger protein 654, found in Mus musculus (Mouse).